We begin with the raw amino-acid sequence, 334 residues long: Nucleoid-associated protein YPN_2714 (334 aa).

This sequence belongs to the YejK family.

It is found in the cytoplasm. The protein localises to the nucleoid. The chain is Nucleoid-associated protein YPN_2714 from Yersinia pestis bv. Antiqua (strain Nepal516).